A 198-amino-acid chain; its full sequence is MQYPEPISKLIDSFMKLPGIGPKTAVRLAFFVLSMKEDVVLDFAKALVNAKRNLTYCSVCGHITDQDPCYICEDTRRDKSVICVVQDPKDVIAMEKMKEYNGLYHVLHGAISPMDGIGPEDIKIPELLKRLQDDQVTEVILATNPNIEGEATAMYISRLLKPSGIKLSRIAHGLPVGGDLEYADEVTLSKALEGRREM.

The segment at Cys-57–Cys-72 adopts a C4-type zinc-finger fold. A Toprim domain is found at Ser-80–Pro-175.

Belongs to the RecR family.

In terms of biological role, may play a role in DNA repair. It seems to be involved in an RecBC-independent recombinational process of DNA repair. It may act with RecF and RecO. This is Recombination protein RecR from Bacillus licheniformis (strain ATCC 14580 / DSM 13 / JCM 2505 / CCUG 7422 / NBRC 12200 / NCIMB 9375 / NCTC 10341 / NRRL NRS-1264 / Gibson 46).